A 459-amino-acid chain; its full sequence is Glycosyl hydrolase family 109 protein 1 (459 aa).

Positions 1–31 form a signal peptide, tat-type signal; the sequence is MHNIHRRHFLKAAGAVTAGLVTANIALNANA. NAD(+) is bound by residues 64 to 65, Asp86, 135 to 138, 155 to 156, and Asn184; these read ER, WEWH, and EV. Substrate-binding positions include Tyr213, Arg232, 244-247, and Tyr326; that span reads YPTH. Residue Tyr244 coordinates NAD(+).

Belongs to the Gfo/Idh/MocA family. Glycosyl hydrolase 109 subfamily. Requires NAD(+) as cofactor. Post-translationally, predicted to be exported by the Tat system. The position of the signal peptide cleavage has not been experimentally proven.

Glycosidase. This chain is Glycosyl hydrolase family 109 protein 1, found in Shewanella sp. (strain ANA-3).